Reading from the N-terminus, the 329-residue chain is Pantothenate kinase (329 aa).

Residues 1–21 are disordered; the sequence is MISPVPSIPRSAHRQRPEATP. 107 to 114 serves as a coordination point for ATP; sequence GSVAVGKS.

This sequence belongs to the prokaryotic pantothenate kinase family.

The protein resides in the cytoplasm. The catalysed reaction is (R)-pantothenate + ATP = (R)-4'-phosphopantothenate + ADP + H(+). It participates in cofactor biosynthesis; coenzyme A biosynthesis; CoA from (R)-pantothenate: step 1/5. The chain is Pantothenate kinase (coaA) from Streptomyces coelicolor (strain ATCC BAA-471 / A3(2) / M145).